Reading from the N-terminus, the 459-residue chain is MSEENKKQILKVRDFIEKHNIDTIRLGAVDIDGVWRGKQVGAEYFLNKAALDGTQISNILFGWDVADHLVDGLEFTGWDSGYPDIALIPDLSTLSLVPWQEKTASVLCDIQHLNGEPLNLSPRNLLRKAIEKAEQLGYKCYAAYEFEFYLLNDSIASISADQWRSINPVEKSGHCYSMLHHSSSSDIMGEVRKYMRDAGIVLEATNSEHGPGQYEINIKYDDALKAADDAIFVKNGIKEIAAKHGMTATFMAKPSAEWSGSSGHVHMSLSDLAGTPVFANPENPGALSEVGYNFLAGMVALAREMSAIYLPNINSYKRTAGASWAGGNSSWGFDNRTVSHRAITSAGSAARVENRIPGADTNPYLVIAASLLSGLYGIENKLKPKDPILGNAYKVSPELARPLAASLEEAAGIFRESEMARVIFPNEFVEHYAQMKVWEIKQSNSFVNNWELARYLDII.

The 97-residue stretch at 19–115 folds into the GS beta-grasp domain; the sequence is HNIDTIRLGA…VLCDIQHLNG (97 aa). The GS catalytic domain maps to 122–459; sequence PRNLLRKAIE…WELARYLDII (338 aa).

The protein belongs to the glutamine synthetase family.

It carries out the reaction isopropylamine + L-glutamate + ATP = gamma-L-glutamyl-isopropylamide + ADP + phosphate + H(+). Functionally, involved in the degradation of isopropylamine, which is a constituent of the herbicides atrazine. Catalyzes the ATP-dependent formation of gamma-glutamyl-isopropylamide from isopropylamine and L-glutamate. It can also use aminoalkanes, amino-alcohols (L-alaninol and D-alaninol) and amino-esters as substrates. This is Glutamate--isopropylamine ligase (ipuC) from Pseudomonas sp.